Consider the following 127-residue polypeptide: Small ribosomal subunit protein uS11 (127 aa).

This sequence belongs to the universal ribosomal protein uS11 family. As to quaternary structure, part of the 30S ribosomal subunit. Interacts with proteins S7 and S18. Binds to IF-3.

Its function is as follows. Located on the platform of the 30S subunit, it bridges several disparate RNA helices of the 16S rRNA. Forms part of the Shine-Dalgarno cleft in the 70S ribosome. This chain is Small ribosomal subunit protein uS11, found in Pelodictyon phaeoclathratiforme (strain DSM 5477 / BU-1).